A 128-amino-acid polypeptide reads, in one-letter code: uncharacterized protein (128 aa).

The VOC domain maps to 5 to 128 (SIHHIAIICS…DQLPLELYEQ (124 aa)). 4 residues coordinate a divalent metal cation: histidine 8, glutamate 56, histidine 77, and glutamate 124.

This is an uncharacterized protein from Bacillus subtilis (strain 168).